We begin with the raw amino-acid sequence, 1403 residues long: Protein FAM135B (1403 aa).

4 disordered regions span residues 445–483 (EKNL…EVQE), 514–548 (EDEC…GQTP), 648–669 (REAL…DLSA), and 718–740 (RHAH…LPSG). Residues 649 to 661 (EALDTKPSQPDHA) are compositionally biased toward basic and acidic residues. Residues 731–740 (TESNTSLPSG) are compositionally biased toward polar residues. 2 positions are modified to phosphoserine: serine 775 and serine 776. The interval 790 to 819 (TAGFSEDLDPSSKENSPPRHTSLSYGGSRV) is disordered. Residues 802–814 (KENSPPRHTSLSY) are compositionally biased toward polar residues.

It belongs to the FAM135 family.

This is Protein FAM135B (Fam135b) from Mus musculus (Mouse).